A 340-amino-acid polypeptide reads, in one-letter code: Anthranilate phosphoribosyltransferase (340 aa).

5-phospho-alpha-D-ribose 1-diphosphate contacts are provided by residues glycine 82, 85–86, threonine 90, 92–95, 110–118, and alanine 122; these read GD, NISS, and KHGGRSVSS. Residue glycine 82 participates in anthranilate binding. Serine 94 is a Mg(2+) binding site. Anthranilate is bound at residue arginine 168. Residues aspartate 227 and glutamate 228 each coordinate Mg(2+).

It belongs to the anthranilate phosphoribosyltransferase family. Homodimer. Requires Mg(2+) as cofactor.

The catalysed reaction is N-(5-phospho-beta-D-ribosyl)anthranilate + diphosphate = 5-phospho-alpha-D-ribose 1-diphosphate + anthranilate. It functions in the pathway amino-acid biosynthesis; L-tryptophan biosynthesis; L-tryptophan from chorismate: step 2/5. Its function is as follows. Catalyzes the transfer of the phosphoribosyl group of 5-phosphorylribose-1-pyrophosphate (PRPP) to anthranilate to yield N-(5'-phosphoribosyl)-anthranilate (PRA). The chain is Anthranilate phosphoribosyltransferase from Dechloromonas aromatica (strain RCB).